The following is a 272-amino-acid chain: Indole-3-glycerol phosphate synthase (272 aa).

Belongs to the TrpC family.

It carries out the reaction 1-(2-carboxyphenylamino)-1-deoxy-D-ribulose 5-phosphate + H(+) = (1S,2R)-1-C-(indol-3-yl)glycerol 3-phosphate + CO2 + H2O. It participates in amino-acid biosynthesis; L-tryptophan biosynthesis; L-tryptophan from chorismate: step 4/5. The chain is Indole-3-glycerol phosphate synthase from Mycolicibacterium smegmatis (strain ATCC 700084 / mc(2)155) (Mycobacterium smegmatis).